Reading from the N-terminus, the 510-residue chain is Probable serine/threonine-protein kinase 2 (510 aa).

The region spanning 111-364 (YVLNKKIGKG…ALQALGHQWF (254 aa)) is the Protein kinase domain. Residues 117–125 (IGKGSFSTA) and K140 each bind ATP. D230 acts as the Proton acceptor in catalysis. The interval 408-428 (NDDIYNNNNNNNQLDPNKNHK) is disordered.

This sequence belongs to the protein kinase superfamily. Ser/Thr protein kinase family.

The protein resides in the membrane. The enzyme catalyses L-seryl-[protein] + ATP = O-phospho-L-seryl-[protein] + ADP + H(+). It catalyses the reaction L-threonyl-[protein] + ATP = O-phospho-L-threonyl-[protein] + ADP + H(+). The chain is Probable serine/threonine-protein kinase 2 (PK2) from Plasmodium falciparum (isolate K1 / Thailand).